The following is a 279-amino-acid chain: NADPH-dependent 7-cyano-7-deazaguanine reductase (279 aa).

Residue 86 to 88 (IES) participates in substrate binding. 88 to 89 (SK) lines the NADPH pocket. Cys187 acts as the Thioimide intermediate in catalysis. The active-site Proton donor is Asp194. 226-227 (HE) is a binding site for substrate. 255–256 (RG) provides a ligand contact to NADPH.

The protein belongs to the GTP cyclohydrolase I family. QueF type 2 subfamily. In terms of assembly, homodimer.

The protein localises to the cytoplasm. It catalyses the reaction 7-aminomethyl-7-carbaguanine + 2 NADP(+) = 7-cyano-7-deazaguanine + 2 NADPH + 3 H(+). It participates in tRNA modification; tRNA-queuosine biosynthesis. Catalyzes the NADPH-dependent reduction of 7-cyano-7-deazaguanine (preQ0) to 7-aminomethyl-7-deazaguanine (preQ1). The protein is NADPH-dependent 7-cyano-7-deazaguanine reductase of Haemophilus influenzae (strain PittEE).